A 92-amino-acid polypeptide reads, in one-letter code: MARSVWKGPFVDGYLLKKAEKVREGGRSEVIKIWSRRSTILPQFVGLTFGVYNGSKHIPVSVNEDMVGHKFGEFSPTRTYYGHGADKKAKRK.

It belongs to the universal ribosomal protein uS19 family.

Functionally, protein S19 forms a complex with S13 that binds strongly to the 16S ribosomal RNA. This Rhizobium johnstonii (strain DSM 114642 / LMG 32736 / 3841) (Rhizobium leguminosarum bv. viciae) protein is Small ribosomal subunit protein uS19.